The primary structure comprises 665 residues: Protein phosphatase 1 regulatory subunit 21 (665 aa).

Coiled-coil stretches lie at residues 1-84, 125-206, 426-477, and 586-627; these read MTDL…SESK, LEAQ…RKYQ, ESRE…EAQV, and KRLA…EDQL.

In terms of assembly, component of the FERRY complex.

It localises to the early endosome. Component of the FERRY complex (Five-subunit Endosomal Rab5 and RNA/ribosome intermediary). The FERRY complex directly interacts with mRNAs and RAB5A, and functions as a RAB5A effector involved in the localization and the distribution of specific mRNAs most likely by mediating their endosomal transport. The complex recruits mRNAs and ribosomes to early endosomes through direct mRNA-interaction. Putative regulator of protein phosphatase 1 (PP1) activity. May play a role in the endosomal sorting process or in endosome maturation pathway. This Danio rerio (Zebrafish) protein is Protein phosphatase 1 regulatory subunit 21 (ppp1r21).